A 791-amino-acid polypeptide reads, in one-letter code: Penicillin-binding protein 1A (791 aa).

Residues 1–6 (MYKSLF) are Cytoplasmic-facing. A helical; Signal-anchor for type II membrane protein transmembrane segment spans residues 7–27 (FCLKILALLFLIGCGIVAYII). At 28–791 (YYYSRDLPDY…TEKDQSQEIY (764 aa)) the chain is on the periplasmic side. A transglycosylase region spans residues 49–220 (TRIYSRDGKL…SELNPEKNYA (172 aa)). The active-site Proton donor; for transglycosylase activity is Glu-87. Residues 398-711 (DVIVVEPVKD…SSVVLPIFID (314 aa)) are transpeptidase. Ser-457 serves as the catalytic Acyl-ester intermediate; for transpeptidase activity.

It in the N-terminal section; belongs to the glycosyltransferase 51 family. In the C-terminal section; belongs to the transpeptidase family.

The protein localises to the cell inner membrane. It carries out the reaction [GlcNAc-(1-&gt;4)-Mur2Ac(oyl-L-Ala-gamma-D-Glu-L-Lys-D-Ala-D-Ala)](n)-di-trans,octa-cis-undecaprenyl diphosphate + beta-D-GlcNAc-(1-&gt;4)-Mur2Ac(oyl-L-Ala-gamma-D-Glu-L-Lys-D-Ala-D-Ala)-di-trans,octa-cis-undecaprenyl diphosphate = [GlcNAc-(1-&gt;4)-Mur2Ac(oyl-L-Ala-gamma-D-Glu-L-Lys-D-Ala-D-Ala)](n+1)-di-trans,octa-cis-undecaprenyl diphosphate + di-trans,octa-cis-undecaprenyl diphosphate + H(+). The catalysed reaction is Preferential cleavage: (Ac)2-L-Lys-D-Ala-|-D-Ala. Also transpeptidation of peptidyl-alanyl moieties that are N-acyl substituents of D-alanine.. The protein operates within cell wall biogenesis; peptidoglycan biosynthesis. Functionally, cell wall formation. Synthesis of cross-linked peptidoglycan from the lipid intermediates. The enzyme has a penicillin-insensitive transglycosylase N-terminal domain (formation of linear glycan strands) and a penicillin-sensitive transpeptidase C-terminal domain (cross-linking of the peptide subunits). This is Penicillin-binding protein 1A (mrcA) from Rickettsia bellii (strain RML369-C).